The following is a 153-amino-acid chain: MEAPAITHSSGCVCSDCQWSGSPTVDTKVYLGSGTHANTTKTRETSFLSVLNDNAWLFVIAALILCLYFIISKPHVDAVYTEFHQDLNGFSMKLAPGVPIDPKVIAAVKNWQKYPFGTDPRENMVTSIVSGLRHSFCILLLVVVLLVYVCHKP.

Topologically, residues 1–50 (MEAPAITHSSGCVCSDCQWSGSPTVDTKVYLGSGTHANTTKTRETSFLSV) are cytoplasmic. A helical membrane pass occupies residues 51–71 (LNDNAWLFVIAALILCLYFII). Residues 72 to 127 (SKPHVDAVYTEFHQDLNGFSMKLAPGVPIDPKVIAAVKNWQKYPFGTDPRENMVTS) are Lumenal-facing. A helical membrane pass occupies residues 128–148 (IVSGLRHSFCILLLVVVLLVY). The Cytoplasmic portion of the chain corresponds to 149–153 (VCHKP).

It belongs to the virgaviridae TGB3 movement protein family. Interacts with movement proteins TGB1 and TGB2. TGB1-TGB3-TGB2 complex formation is enhanced by ATP hydrolysis.

The protein localises to the host cell junction. It localises to the host plasmodesma. Its subcellular location is the host endoplasmic reticulum membrane. The protein resides in the host cytoplasm. It is found in the host cytoskeleton. Participates in the transport of viral genome to neighboring plant cells directly through plasmodesmata, without any budding. TGBp2 and TGBp3 are necessary for intracellular delivery of TGBp1-containing vRNPs to plasmodesmata. Can gate plasmodesmata and increase their size exclusion limit. Induces host actin cytoskeleton network thickening, which probably plays a major role in virus cell-to-cell movement. This chain is Movement protein TGB3, found in Arachis hypogaea (Peanut).